The following is a 103-amino-acid chain: Small ribosomal subunit protein uS10 (103 aa).

This sequence belongs to the universal ribosomal protein uS10 family. In terms of assembly, part of the 30S ribosomal subunit.

Functionally, involved in the binding of tRNA to the ribosomes. The sequence is that of Small ribosomal subunit protein uS10 from Verminephrobacter eiseniae (strain EF01-2).